The following is a 190-amino-acid chain: Glutathione peroxidase 2 (190 aa).

Residue selenocysteine 40 is part of the active site. Position 40 (selenocysteine 40) is a non-standard amino acid, selenocysteine.

Belongs to the glutathione peroxidase family. As to quaternary structure, homotetramer.

It localises to the cytoplasm. Its subcellular location is the cytosol. The enzyme catalyses 2 glutathione + H2O2 = glutathione disulfide + 2 H2O. It carries out the reaction a hydroperoxy polyunsaturated fatty acid + 2 glutathione = a hydroxy polyunsaturated fatty acid + glutathione disulfide + H2O. The catalysed reaction is tert-butyl hydroperoxide + 2 glutathione = tert-butanol + glutathione disulfide + H2O. It catalyses the reaction cumene hydroperoxide + 2 glutathione = 2-phenylpropan-2-ol + glutathione disulfide + H2O. The enzyme catalyses (13S)-hydroperoxy-(9Z,11E)-octadecadienoate + 2 glutathione = (13S)-hydroxy-(9Z,11E)-octadecadienoate + glutathione disulfide + H2O. It carries out the reaction (5S)-hydroperoxy-(6E,8Z,11Z,14Z)-eicosatetraenoate + 2 glutathione = (5S)-hydroxy-(6E,8Z,11Z,14Z)-eicosatetraenoate + glutathione disulfide + H2O. The catalysed reaction is (12R)-hydroperoxy-(5Z,8Z,10E,14Z)-eicosatetraenoate + 2 glutathione = (12R)-hydroxy-(5Z,8Z,10E,14Z)-eicosatetraenoate + glutathione disulfide + H2O. It catalyses the reaction (15S)-hydroperoxy-(5Z,8Z,11Z,13E)-eicosatetraenoate + 2 glutathione = (15S)-hydroxy-(5Z,8Z,11Z,13E)-eicosatetraenoate + glutathione disulfide + H2O. Catalyzes the reduction of hydroperoxides in a glutathione-dependent manner thus regulating cellular redox homeostasis. Can reduce small soluble hydroperoxides such as H2O2, cumene hydroperoxide and tert-butyl hydroperoxide, as well as several fatty acid-derived hydroperoxides. Cannot reduce phosphatidycholine hydroperoxide. This Sapajus apella (Brown-capped capuchin) protein is Glutathione peroxidase 2 (GPX2).